The primary structure comprises 108 residues: Glutaredoxin-1 (108 aa).

Residues 3-106 (EEFVQQRLAN…DILLSIGVLR (104 aa)) enclose the Glutaredoxin domain. A disulfide bond links C23 and C26.

It belongs to the glutaredoxin family.

It localises to the virion. In terms of biological role, displays thioltransferase and dehydroascorbate reductase activities. The sequence is that of Glutaredoxin-1 (OPG075) from Cynomys gunnisoni (Gunnison's prairie dog).